Reading from the N-terminus, the 72-residue chain is Hypotensin (72 aa).

An N-terminal signal peptide occupies residues 1–24; the sequence is MKMMIAVFVSILLLMFSLSSTAMG. Propeptides lie at residues 25 to 35 and 61 to 72; these read METEQQNMEER and RFDPATFGENED.

It belongs to the non-disulfide-bridged peptide (NDBP) superfamily. In terms of tissue distribution, expressed by the venom gland.

Its subcellular location is the secreted. In terms of biological role, potentiates the hypotensive action of bradykinin (BK) in normotensive rats, and induces a vasorelaxant effect in mesenteric artery rings that is induced by endothelium-dependent release of nitric oxide (NO). Does not inhibit angiotensin converting enzyme (ACE). Shows neither hemolytic activity nor cytotoxicity to normal and cancer cells. Shows moderate antimicrobial activity against the fungi Candida albicans and the filamentous fungus Trichophyton rubrum, as well as against the bacteria C.albicans (MIC=128 ug/mL), C.tropicalis (MIC=128 ug/mL) and Aspergillus flavus (MIC=128 ug/mL). Has no antimicrobial activity against S.aureus, S.epidermidis and P.aeruginosa. In Tityus stigmurus (Brazilian scorpion), this protein is Hypotensin.